We begin with the raw amino-acid sequence, 552 residues long: Hyaluronan synthase 2 (552 aa).

Residues 1–11 (MHCERFLCILR) are Cytoplasmic-facing. The chain crosses the membrane as a helical span at residues 12–32 (IIGTTLFGVSLLLGITAAYIV). Residues 33–45 (GYQFIQTDNYYFS) lie on the Extracellular side of the membrane. The chain crosses the membrane as a helical span at residues 46–66 (FGLYGAFLASHLIIQSLFAFL). The Cytoplasmic segment spans residues 67–374 (EHRKMKKSLE…NAMWFHKHHL (308 aa)). Thr-110 is subject to Phosphothreonine. A Glycyl lysine isopeptide (Lys-Gly) (interchain with G-Cter in ubiquitin) cross-link involves residue Lys-190. Ser-221 carries an O-linked (GlcNAc) serine glycan. At Thr-328 the chain carries Phosphothreonine. Residues 375–395 (WMTYEAVITGFFPFFLIATVI) traverse the membrane as a helical segment. Over 396–402 (QLFYRGK) the chain is Extracellular. Residues 403 to 423 (IWNTLLFLLTVQLVGLIKSSF) traverse the membrane as a helical segment. The Cytoplasmic portion of the chain corresponds to 424–429 (ASCLRG). Residues 430–450 (NIVMVFMSLYSVLYMSSLLPA) traverse the membrane as a helical segment. Over 451–475 (KMFAIATINKAGWGTSGRKTIVVNF) the chain is Extracellular. The chain crosses the membrane as a helical span at residues 476 to 496 (IGLIPVSVWFTILLGGVIFTI). The Cytoplasmic segment spans residues 497-510 (YKESKKPFSESKQT). A helical transmembrane segment spans residues 511 to 531 (VLIVGTLLYACYWVMLLTLYV). Topologically, residues 532 to 552 (VLINKCGRRKKGQQYDMVLDV) are extracellular.

Belongs to the NodC/HAS family. Homodimer; dimerization promotes enzymatic activity. Forms heterodimer with HAS3. Forms heterodimer with HAS1. The cofactor is Mg(2+). In terms of processing, phosphorylation at Thr-328 is essential for hyaluronan synthase activity. Post-translationally, O-GlcNAcylation at Ser-221 increases the stability of HAS2 and plasma membrane localization. Ubiquitination at Lys-190; this ubiquitination is essential for hyaluronan synthase activity and homo- or hetero-oligomerization. Can also be poly-ubiquitinated. Deubiquitinated by USP17 and USP4. USP17 efficiently removes 'Lys-63'- and 'Lys-48'-linked polyubiquitin chains, whereas USP4 preferentially removes monoubiquitination and, partially, both 'Lys-63'- and 'Lys-48'-linked polyubiquitin chain. As to expression, expressed in corneal endothelial cells.

The protein localises to the cell membrane. It is found in the endoplasmic reticulum membrane. Its subcellular location is the vesicle. It localises to the golgi apparatus membrane. The protein resides in the lysosome. The catalysed reaction is [hyaluronan](n) + UDP-N-acetyl-alpha-D-glucosamine = N-acetyl-beta-D-glucosaminyl-(1-&gt;4)-[hyaluronan](n) + UDP + H(+). It catalyses the reaction N-acetyl-beta-D-glucosaminyl-(1-&gt;4)-[hyaluronan](n) + UDP-alpha-D-glucuronate = [hyaluronan](n+1) + UDP + H(+). It participates in glycan biosynthesis; hyaluronan biosynthesis. Catalyzes the addition of GlcNAc or GlcUA monosaccharides to the nascent hyaluronan polymer. Therefore, it is essential to hyaluronan synthesis a major component of most extracellular matrices that has a structural role in tissues architectures and regulates cell adhesion, migration and differentiation. This is one of three isoenzymes responsible for cellular hyaluronan synthesis and it is particularly responsible for the synthesis of high molecular mass hyaluronan. This is Hyaluronan synthase 2 (HAS2) from Bos taurus (Bovine).